The chain runs to 367 residues: DNA replication and repair protein RecF (367 aa).

An ATP-binding site is contributed by 30–37 (GANGSGKT).

The protein belongs to the RecF family.

Its subcellular location is the cytoplasm. The RecF protein is involved in DNA metabolism; it is required for DNA replication and normal SOS inducibility. RecF binds preferentially to single-stranded, linear DNA. It also seems to bind ATP. This Pseudomonas fluorescens (strain ATCC BAA-477 / NRRL B-23932 / Pf-5) protein is DNA replication and repair protein RecF.